A 160-amino-acid chain; its full sequence is Ribosomal RNA large subunit methyltransferase H (160 aa).

Residues L76, G108, and L127 to W132 each bind S-adenosyl-L-methionine.

It belongs to the RNA methyltransferase RlmH family. Homodimer.

It is found in the cytoplasm. The catalysed reaction is pseudouridine(1915) in 23S rRNA + S-adenosyl-L-methionine = N(3)-methylpseudouridine(1915) in 23S rRNA + S-adenosyl-L-homocysteine + H(+). Specifically methylates the pseudouridine at position 1915 (m3Psi1915) in 23S rRNA. The sequence is that of Ribosomal RNA large subunit methyltransferase H from Sinorhizobium medicae (strain WSM419) (Ensifer medicae).